A 267-amino-acid polypeptide reads, in one-letter code: NLP effector protein 6 (267 aa).

Positions 1–35 are cleaved as a signal peptide; it reads MRTTSPYSHCSHVEMNAGAFVTMLLVALSVCVAAA. N114 is a glycosylation site (N-linked (GlcNAc...) asparagine). Residues 117–127 carry the Conserved undecapeptide motif motif; the sequence is AIMYAWYFPKR. The Conserved heptapeptide motif motif lies at 134–140; the sequence is IQRHDWK. N192 is a glycosylation site (N-linked (GlcNAc...) asparagine).

It belongs to the Necrosis inducing protein (NPP1) family.

Its subcellular location is the secreted. Its function is as follows. Probable secreted effector that may act as a pathogen-associated molecular pattern (PAMP) recognized by the plant immune system. The chain is NLP effector protein 6 from Plasmopara viticola (Downy mildew of grapevine).